Here is a 294-residue protein sequence, read N- to C-terminus: Nucleophosmin (294 aa).

The segment covering 121–133 (LEEEPESEDEEED) has biased composition (acidic residues). The segment at 121–244 (LEEEPESEDE…PKTPKVPLSL (124 aa)) is disordered. The Nuclear localization signal signature appears at 153–158 (PQKKPK). Residues 161-186 (EDDEDDDEDEDDDEDDEDDLDDDEEE) show a composition bias toward acidic residues. The short motif at 190 to 196 (PMKKPAR) is the Nuclear localization signal element. Over residues 223-233 (KTPDSKKDKSL) the composition is skewed to basic and acidic residues.

Belongs to the nucleoplasmin family. In terms of assembly, decamer formed by two pentameric rings associated in a head-to-head fashion. Post-translationally, phosphorylated.

The protein localises to the cytoplasm. Its subcellular location is the nucleus. It localises to the nucleoplasm. The protein resides in the nucleolus. In terms of biological role, acts as a chaperonin for the core histones H3, H2B and H4. Associated with nucleolar ribonucleoprotein structures and bind single-stranded nucleic acids. It may function in the assembly and/or transport of ribosome. May stimulate endonuclease activity on apurinic/apyrimidinic (AP) double-stranded DNA. May inhibit endonuclease activity on AP single-stranded RNA. The chain is Nucleophosmin (NPM1) from Gallus gallus (Chicken).